The sequence spans 124 residues: Large ribosomal subunit protein bL12 (124 aa).

Basic and acidic residues predominate over residues 101–115 (ALSKDDAEKAKKELE). Residues 101 to 124 (ALSKDDAEKAKKELEEAGATVELK) are disordered.

It belongs to the bacterial ribosomal protein bL12 family. In terms of assembly, homodimer. Part of the ribosomal stalk of the 50S ribosomal subunit. Forms a multimeric L10(L12)X complex, where L10 forms an elongated spine to which 2 to 4 L12 dimers bind in a sequential fashion. Binds GTP-bound translation factors.

Its function is as follows. Forms part of the ribosomal stalk which helps the ribosome interact with GTP-bound translation factors. Is thus essential for accurate translation. The chain is Large ribosomal subunit protein bL12 from Hahella chejuensis (strain KCTC 2396).